The following is a 335-amino-acid chain: SLAM family member 7 (335 aa).

Positions 1-22 (MAGSPTCLTLIYILWQLTGSAA) are cleaved as a signal peptide. The Ig-like V-type domain maps to 23-124 (SGPVKELVGS…PSTQEYVLHV (102 aa)). Topologically, residues 23-226 (SGPVKELVGS…GAADDPDSSM (204 aa)) are extracellular. 6 N-linked (GlcNAc...) asparagine glycosylation sites follow: N98, N142, N148, N172, N176, and N204. The Ig-like C2-type domain maps to 131-206 (PKVTMGLQSN…ARNPVSRNFS (76 aa)). Intrachain disulfides connect C145–C215 and C151–C195. The chain crosses the membrane as a helical span at residues 227 to 247 (VLLCLLLVPLLLSLFVLGLFL). Residues 248–335 (WFLKRERQEE…PRLFAYENVI (88 aa)) are Cytoplasmic-facing. An interaction with FYN when phosphorylated at Tyr-284 region spans residues 278-296 (SGENTEYDTIPHTNRTILK). The short motif at 302–307 (TVYSTV) is the ITSM element.

As to quaternary structure, isoform 1 binds to SH2D1A when its cytoplasmic tail is phosphorylated in the presence of FYN (in vitro); low affinity binding, the physiological relevance of the interaction is questioned. Interacts with SH2D1B; in NK cells. Interacts (via ITSM phosphorylated on Tyr-302) with SH2D1B, PTPN6/SHP-1, PTPN11/SHP-2, INPP5D/SHIP1, CSK and FYN. In terms of tissue distribution, expressed in spleen, lymph node, peripheral blood leukocytes, bone marrow, small intestine, stomach, appendix, lung and trachea. Expression was detected in NK cells, activated B-cells, NK-cell line but not in promyelocytic, B-, or T-cell lines. Expressed in monocytes. Isoform 3 is expressed at much lower level than isoform 1.

It localises to the membrane. Self-ligand receptor of the signaling lymphocytic activation molecule (SLAM) family. SLAM receptors triggered by homo- or heterotypic cell-cell interactions are modulating the activation and differentiation of a wide variety of immune cells and thus are involved in the regulation and interconnection of both innate and adaptive immune response. Activities are controlled by presence or absence of small cytoplasmic adapter proteins, SH2D1A/SAP and/or SH2D1B/EAT-2. Isoform 1 mediates NK cell activation through a SH2D1A-independent extracellular signal-regulated ERK-mediated pathway. Positively regulates NK cell functions by a mechanism dependent on phosphorylated SH2D1B. Downstream signaling implicates PLCG1, PLCG2 and PI3K. In addition to heterotypic NK cells-target cells interactions also homotypic interactions between NK cells may contribute to activation. However, in the absence of SH2D1B, inhibits NK cell function. Also acts inhibitory in T-cells. May play a role in lymphocyte adhesion. In LPS-activated monocytes negatively regulates production of pro-inflammatory cytokines. In terms of biological role, isoform 3 does not mediate any NK cell activation. The sequence is that of SLAM family member 7 (SLAMF7) from Homo sapiens (Human).